The following is a 99-amino-acid chain: A-type ATP synthase subunit F (99 aa).

It belongs to the V-ATPase F subunit family. Has multiple subunits with at least A(3), B(3), C, D, E, F, H, I and proteolipid K(x).

Its subcellular location is the cell membrane. Functionally, component of the A-type ATP synthase that produces ATP from ADP in the presence of a proton gradient across the membrane. This Methanothrix thermoacetophila (strain DSM 6194 / JCM 14653 / NBRC 101360 / PT) (Methanosaeta thermophila) protein is A-type ATP synthase subunit F.